The sequence spans 140 residues: Putative pre-16S rRNA nuclease (140 aa).

Belongs to the YqgF nuclease family.

The protein resides in the cytoplasm. In terms of biological role, could be a nuclease involved in processing of the 5'-end of pre-16S rRNA. This Edwardsiella ictaluri (strain 93-146) protein is Putative pre-16S rRNA nuclease.